Here is a 304-residue protein sequence, read N- to C-terminus: Large ribosomal subunit protein uL18y (304 aa).

It belongs to the universal ribosomal protein uL18 family. In terms of assembly, component of the large ribosomal subunit (LSU).

It is found in the cytoplasm. It localises to the nucleus. Its function is as follows. Component of the ribosome, a large ribonucleoprotein complex responsible for the synthesis of proteins in the cell. The small ribosomal subunit (SSU) binds messenger RNAs (mRNAs) and translates the encoded message by selecting cognate aminoacyl-transfer RNA (tRNA) molecules. The large subunit (LSU) contains the ribosomal catalytic site termed the peptidyl transferase center (PTC), which catalyzes the formation of peptide bonds, thereby polymerizing the amino acids delivered by tRNAs into a polypeptide chain. The nascent polypeptides leave the ribosome through a tunnel in the LSU and interact with protein factors that function in enzymatic processing, targeting, and the membrane insertion of nascent chains at the exit of the ribosomal tunnel. The sequence is that of Large ribosomal subunit protein uL18y (RPL5B) from Oryza sativa subsp. japonica (Rice).